We begin with the raw amino-acid sequence, 118 residues long: T cell receptor gamma variable 8 (118 aa).

A signal peptide spans 1 to 17 (MLLALALLLAFLPPASQ). Residues 18 to 118 (KSSNLEGRTK…GVYYCATWDR (101 aa)) enclose the Ig-like domain. A disulfide bridge connects residues Cys-41 and Cys-113.

In terms of assembly, gamma-delta TR is a heterodimer composed of a gamma and delta chain; disulfide-linked. The gamma-delta TR is associated with the transmembrane signaling CD3 coreceptor proteins following the stoichiometry: a single gamma-delta TR heterodimer associates with one CD3D-CD3E heterodimer, one CD3G-CD3E heterodimer and one CD247 homodimer forming a stable octameric structure. Upon activation, gamma-delta TR complex associates with FCER1G to initiate intracellular signaling.

It localises to the cell membrane. Functionally, v region of the variable domain of T cell receptor (TR) gamma chain that participates in the antigen recognition. Gamma-delta TRs recognize a variety of self and foreign non-peptide antigens frequently expressed at the epithelial boundaries between the host and external environment, including endogenous lipids presented by MH-like protein CD1D and phosphoantigens presented by butyrophilin-like molecule BTN3A1. Upon antigen recognition induces rapid, innate-like immune responses involved in pathogen clearance and tissue repair. Binding of gamma-delta TR complex to antigen triggers phosphorylation of immunoreceptor tyrosine-based activation motifs (ITAMs) in the CD3 chains by the LCK and FYN kinases, allowing the recruitment, phosphorylation, and activation of ZAP70 that facilitates phosphorylation of the scaffolding proteins LCP2 and LAT. This lead to the formation of a supramolecular signalosome that recruits the phospholipase PLCG1, resulting in calcium mobilization and ERK activation, ultimately leading to T cell expansion and differentiation into effector cells. Gamma-delta TRs are produced through somatic rearrangement of a limited repertoire of variable (V), diversity (D), and joining (J) genes. The potential diversity of gamma-delta TRs is conferred by the unique ability to rearrange (D) genes in tandem and to utilize all three reading frames. The combinatorial diversity is considerably increased by the sequence exonuclease trimming and random nucleotide (N) region additions which occur during the V-(D)-J rearrangements. The protein is T cell receptor gamma variable 8 of Homo sapiens (Human).